Here is a 563-residue protein sequence, read N- to C-terminus: Arginine--tRNA ligase (563 aa).

The 'HIGH' region motif lies at 120 to 130 (PNIAKPFHIGH).

This sequence belongs to the class-I aminoacyl-tRNA synthetase family. As to quaternary structure, monomer.

Its subcellular location is the cytoplasm. The catalysed reaction is tRNA(Arg) + L-arginine + ATP = L-arginyl-tRNA(Arg) + AMP + diphosphate. This is Arginine--tRNA ligase from Clostridium botulinum (strain ATCC 19397 / Type A).